Here is a 1352-residue protein sequence, read N- to C-terminus: MDAATPDCTSKCRSLKHALDVLSVVTKGSESQIKSFLARYCYNAATVKDAFGRNAGHLASSCGKKGVLDWLIEKGVDLLVKDKESGWTALHRSVFYGHIDCVWSLLKHGVSLYMQDKEGLSPLDLLMKDRPTHVVFKDTDPTEVYTWGDNTNFTLGHGSQNSKHHPELLDLFSRSGVYVKQVVLCKFHSVFLSQKGQVYTCGHGRGGRLGHGDEQTCLVPRLVEGLSGHNCSQVAAAKDHTVVLTDDGCVYTFGLNMFHQLGIIPPPASCNVPRQIQAKYLKGRTIIGVAAGRFHTVLWTREAVYTLGLNGGQLGHLLDPNGEKCVTTPRQVSALHHKDIAVSLVAASDGATVCVTTRGDIYLLADYQCKKMATKQLNLKKVLVSGGCMEYKVDPEHLTENGGQKICVLAMDGAGRVFCWRSISSSLKQCRWAYPRQVSISDIALNRNEILFVTQDGEGFKGKWFEDKRKNSEKKADILPNLHHSSSDVSCVPDTNSVYERIRLEKLPFAHRAVSVSTDPSGCNFAILQSDPKTSLYEIPVVSSSSFFEEFGKLLRETDEMDSFHDVTFQVGNRHFPAHKYILAVRSDFFQKLFLSDGSSLELTDVYQKDEDAAGCHLFVVEKVHPDLFEYLLQFMYTDTCDLLTHGFKPRMIVKRKAEDCEGSPDSHLHTVNCHVDDKQKSAFEVYRSNQAHTLSERQKSKPKSSKKGKGVGDDDPVRMLQSVAKKFGLSNLSSRLEGVRLENEKINVIAKKTGNKLKLSQKKCSFLYDVTMKSVDGKEFSCHKCVLCARLEYFHSMLSRSWIEASSCAALEMPIQSEILKVILDYLYTDEAVVIKESQNVDFVCSVLVVADQLLITRLKEICEVALTENLTLKNAAMLLEFAALYNAGQLKLSCLQFIGLNMAALLEARSLDVLSEDVLKDLSIFYRKMIPAMERRVITPYQDGPDISSMQVEDGEVFFKEEINMEPNYSETMFKKAKTRAKKKPRKRSDSSGGYTLSDVIQSPPSAGLLKSAKTNSVESLPELLTSDSEGSYAGVASPRDLQSPDFTAGFHSDKVEGKAKPYVNGIPPPCTREDVKPWEKSPTTKSAPQFIPSNRVDTAASSSWLAGSCSPVSPPVVDLRTIMETEENRQKYGAAPKSNLGKIISHGIKLSQKQRKMIALTTKENNSGTNSMEAILTAPSKSPKPANAWAPLHSPLSRSFRDFLLEEKKPVPGYGSGDHVKKVCFKGTENSPALNVARCSTHGTPGLESNHVSDFPLLDSPNPWQSSSLAASPAVAPVTFASIVEEERQQEAALIRSREKPLALIQVEEHAIQDLLVFYEAFGNPEEFVVVERAPQGPLAVPMWNKHGC.

ANK repeat units follow at residues 51 to 80 (FGRNAGHLASSCGKKGVLDWLIEKGVDLLV) and 85 to 114 (SGWTALHRSVFYGHIDCVWSLLKHGVSLYM). RCC1 repeat units follow at residues 141–194 (PTEV…FLSQ), 195–246 (KGQV…VLTD), and 248–301 (GCVY…LWTR). The BTB 1 domain occupies 565–645 (HDVTFQVGNR…MYTDTCDLLT (81 aa)). The interval 692–716 (AHTLSERQKSKPKSSKKGKGVGDDD) is disordered. Basic residues predominate over residues 701 to 710 (SKPKSSKKGK). A BTB 2 domain is found at 769–837 (YDVTMKSVDG…LYTDEAVVIK (69 aa)). The tract at residues 976 to 1002 (FKKAKTRAKKKPRKRSDSSGGYTLSDV) is disordered. Over residues 977–989 (KKAKTRAKKKPRK) the composition is skewed to basic residues. Ser991 carries the post-translational modification Phosphoserine. The segment covering 993–1002 (SSGGYTLSDV) has biased composition (polar residues). Ser1005, Ser1031, Ser1034, Ser1040, Ser1046, Ser1055, Ser1084, Ser1111, Ser1113, and Ser1116 each carry phosphoserine. The interval 1032–1094 (EGSYAGVASP…PTTKSAPQFI (63 aa)) is disordered. The span at 1084–1094 (SPTTKSAPQFI) shows a compositional bias: polar residues.

As to quaternary structure, interacts with the PH domain of BTK.

Its subcellular location is the cytoplasm. The protein resides in the membrane. Functionally, acts as an inhibitor of BTK tyrosine kinase activity, thereby playing a role in B-cell development. Down-regulates BTK kinase activity, leading to interference with BTK-mediated calcium mobilization and NF-kappa-B-driven transcription. The sequence is that of Inhibitor of Bruton tyrosine kinase (Ibtk) from Mus musculus (Mouse).